A 223-amino-acid chain; its full sequence is Endonuclease V (223 aa).

2 residues coordinate Mg(2+): Asp35 and Asp103.

The protein belongs to the endonuclease V family. Mg(2+) is required as a cofactor.

The protein resides in the cytoplasm. The enzyme catalyses Endonucleolytic cleavage at apurinic or apyrimidinic sites to products with a 5'-phosphate.. Its function is as follows. DNA repair enzyme involved in the repair of deaminated bases. Selectively cleaves double-stranded DNA at the second phosphodiester bond 3' to a deoxyinosine leaving behind the intact lesion on the nicked DNA. The polypeptide is Endonuclease V (Salmonella agona (strain SL483)).